Consider the following 139-residue polypeptide: D-ribose pyranase (139 aa).

The active-site Proton donor is the His-20. Substrate contacts are provided by residues Asp-28, His-106, and 128–130 (YAN).

Belongs to the RbsD / FucU family. RbsD subfamily. Homodecamer.

The protein localises to the cytoplasm. It carries out the reaction beta-D-ribopyranose = beta-D-ribofuranose. Its pathway is carbohydrate metabolism; D-ribose degradation; D-ribose 5-phosphate from beta-D-ribopyranose: step 1/2. Catalyzes the interconversion of beta-pyran and beta-furan forms of D-ribose. This chain is D-ribose pyranase, found in Photobacterium profundum (strain SS9).